A 353-amino-acid chain; its full sequence is Photosystem II protein D1 (353 aa).

T2 bears the N-acetylthreonine mark. The residue at position 2 (T2) is a Phosphothreonine. A run of 3 helical transmembrane segments spans residues 29-46 (YIGWFGVLMIPTLLTATS), 118-133 (HFLLGVACYMGREWEL), and 142-156 (WIAVAYSAPVAAATA). Residue H118 coordinates chlorophyll a. A pheophytin a-binding site is contributed by Y126. [CaMn4O5] cluster-binding residues include D170 and E189. Residues 197–218 (FHMLGVAGVFGGSLFSAMHGSL) form a helical membrane-spanning segment. A chlorophyll a-binding site is contributed by H198. Residues H215 and 264 to 265 (SF) contribute to the a quinone site. H215 is a Fe cation binding site. H272 is a Fe cation binding site. Residues 274–288 (FLAAWPVVGIWFTAL) traverse the membrane as a helical segment. The [CaMn4O5] cluster site is built by H332, E333, D342, and A344. The propeptide occupies 345–353 (AIEAPSTNG).

It belongs to the reaction center PufL/M/PsbA/D family. PSII is composed of 1 copy each of membrane proteins PsbA, PsbB, PsbC, PsbD, PsbE, PsbF, PsbH, PsbI, PsbJ, PsbK, PsbL, PsbM, PsbT, PsbX, PsbY, PsbZ, Psb30/Ycf12, at least 3 peripheral proteins of the oxygen-evolving complex and a large number of cofactors. It forms dimeric complexes. Requires The D1/D2 heterodimer binds P680, chlorophylls that are the primary electron donor of PSII, and subsequent electron acceptors. It shares a non-heme iron and each subunit binds pheophytin, quinone, additional chlorophylls, carotenoids and lipids. D1 provides most of the ligands for the Mn4-Ca-O5 cluster of the oxygen-evolving complex (OEC). There is also a Cl(-1) ion associated with D1 and D2, which is required for oxygen evolution. The PSII complex binds additional chlorophylls, carotenoids and specific lipids. as cofactor. Post-translationally, tyr-161 forms a radical intermediate that is referred to as redox-active TyrZ, YZ or Y-Z. C-terminally processed by CTPA; processing is essential to allow assembly of the oxygen-evolving complex and thus photosynthetic growth.

The protein localises to the plastid. Its subcellular location is the chloroplast thylakoid membrane. It catalyses the reaction 2 a plastoquinone + 4 hnu + 2 H2O = 2 a plastoquinol + O2. In terms of biological role, photosystem II (PSII) is a light-driven water:plastoquinone oxidoreductase that uses light energy to abstract electrons from H(2)O, generating O(2) and a proton gradient subsequently used for ATP formation. It consists of a core antenna complex that captures photons, and an electron transfer chain that converts photonic excitation into a charge separation. The D1/D2 (PsbA/PsbD) reaction center heterodimer binds P680, the primary electron donor of PSII as well as several subsequent electron acceptors. This Citrus sinensis (Sweet orange) protein is Photosystem II protein D1.